The chain runs to 295 residues: Probable isochorismatase (295 aa).

The interval 1 to 21 (MGIPKIAGYPLPTPAEFPDNR) is disordered. The 80-residue stretch at 207-286 (EIRSQKPLTL…EWWLVIEQAR (80 aa)) folds into the Carrier domain. An O-(pantetheine 4'-phosphoryl)serine modification is found at serine 247.

This sequence belongs to the isochorismatase family. Pantetheine 4'-phosphate serves as cofactor.

It catalyses the reaction isochorismate + H2O = (2S,3S)-2,3-dihydroxy-2,3-dihydrobenzoate + pyruvate. Its pathway is siderophore biosynthesis; vulnibactin biosynthesis. Involved in the biosynthesis of the catechol siderophore vulnibactin. Vulnibactin is a chelating compound involved in transporting iron from the bacterial environment into the cell cytoplasm. This Vibrio vulnificus (strain CMCP6) protein is Probable isochorismatase (venB).